The chain runs to 180 residues: Shikimate kinase (180 aa).

14 to 19 (GAGKSC) lines the ATP pocket. A Mg(2+)-binding site is contributed by Ser-18. Substrate is bound by residues Asp-36, Arg-60, and Gly-82. Arg-120 serves as a coordination point for ATP. Arg-139 is a binding site for substrate.

The protein belongs to the shikimate kinase family. Monomer. It depends on Mg(2+) as a cofactor.

The protein localises to the cytoplasm. It carries out the reaction shikimate + ATP = 3-phosphoshikimate + ADP + H(+). Its pathway is metabolic intermediate biosynthesis; chorismate biosynthesis; chorismate from D-erythrose 4-phosphate and phosphoenolpyruvate: step 5/7. Catalyzes the specific phosphorylation of the 3-hydroxyl group of shikimic acid using ATP as a cosubstrate. The protein is Shikimate kinase of Xanthomonas axonopodis pv. citri (strain 306).